A 522-amino-acid polypeptide reads, in one-letter code: Zinc finger protein 892 (522 aa).

Disordered regions lie at residues 1–22 (MEPE…GNPK) and 96–124 (AASQ…ESAP). Residues 100-116 (KHWETIPESKELTPEKD) show a composition bias toward basic and acidic residues. 10 C2H2-type zinc fingers span residues 221–243 (WKCN…QRIH), 249–271 (YECN…QRIH), 277–299 (YECH…HIIH), 305–327 (YECN…QRIH), 333–355 (YECN…QVIH), 361–383 (YKCN…QRTH), 389–411 (YECN…QRTH), 417–439 (YKCN…QRTH), 445–467 (YKCK…QKTH), and 473–495 (YKCK…QKTH).

This sequence belongs to the krueppel C2H2-type zinc-finger protein family.

It localises to the nucleus. In terms of biological role, may be involved in transcriptional regulation. The chain is Zinc finger protein 892 from Homo sapiens (Human).